Reading from the N-terminus, the 910-residue chain is Eukaryotic translation initiation factor 3 subunit C (910 aa).

The segment at 1-21 is disordered; sequence MSRFFANGSESESESSEEEIQ. Residues 11-20 are compositionally biased toward acidic residues; it reads SESESSEEEI. Phosphoserine is present on residues serine 34, serine 165, serine 176, and serine 185. The disordered stretch occupies residues 157-279; that stretch reads FREAPDQESE…IRKRAEDDED (123 aa). Positions 162-186 are enriched in acidic residues; the sequence is DQESEAEDEVVALESDGGDAGDDSD. The segment covering 194-207 has biased composition (low complexity); the sequence is AVPKAVKSAPAKAA. Over residues 209 to 235 the composition is skewed to acidic residues; it reads ADDDDSDDSIDWDSDSESETESSDDEN. Basic and acidic residues predominate over residues 240–268; it reads MRERFLKRTTEKEEKDDDKRKDKRKEQKT. A PCI domain is found at 639-815; sequence FHMHINLELL…ETVGMHRSEP (177 aa). Residues 847-910 form a disordered region; the sequence is FFQRGNMGNR…QQQVQTIDEE (64 aa). Low complexity predominate over residues 862–874; it reads NRNQNNQGGNWLG. Residues 882–891 show a composition bias toward basic residues; the sequence is RNRNQRGHHK. Positions 895-910 are enriched in low complexity; it reads DRQQQQQQQVQTIDEE.

It belongs to the eIF-3 subunit C family. As to quaternary structure, component of the eukaryotic translation initiation factor 3 (eIF-3) complex. The eIF-3 complex interacts with pix.

It localises to the cytoplasm. Component of the eukaryotic translation initiation factor 3 (eIF-3) complex, which is involved in protein synthesis of a specialized repertoire of mRNAs and, together with other initiation factors, stimulates binding of mRNA and methionyl-tRNAi to the 40S ribosome. The eIF-3 complex specifically targets and initiates translation of a subset of mRNAs involved in cell proliferation. The polypeptide is Eukaryotic translation initiation factor 3 subunit C (Drosophila melanogaster (Fruit fly)).